Consider the following 517-residue polypeptide: T-box transcription factor TBX5 (517 aa).

The interval 1-46 (MADADEGFGLARTPLEPDSKDRSCDSKPESALGAPSKSPSSPQAAF) is disordered. The span at 15 to 28 (LEPDSKDRSCDSKP) shows a compositional bias: basic and acidic residues. A compositionally biased stretch (low complexity) spans 34–45 (APSKSPSSPQAA). Residues 58-238 (LHERELWLKF…NNPFAKGFRG (181 aa)) constitute a DNA-binding region (T-box). Disordered regions lie at residues 270 to 313 (HSPF…YPLA) and 331 to 369 (SSTE…SYRT). Over residues 271–300 (SPFSSETRALSTSSNLGSQYQCENGVSGPS) the composition is skewed to polar residues. N6-acetyllysine is present on K338. Over residues 357–369 (YPQQQGLSTSYRT) the composition is skewed to polar residues.

As to quaternary structure, monomer. Homodimer (via the T-box); binds DNA as homodimer. Interacts (via the T-box) with NKX2-5 (via the homeobox); this complex binds DNA. Interacts with GATA4. Interacts with KAT2A and KAT2B. Post-translationally, acetylation at Lys-338 by KAT2A and KAT2B promotes nuclear retention.

Its subcellular location is the nucleus. The protein localises to the cytoplasm. In terms of biological role, DNA-binding protein that regulates the transcription of several genes and is involved in heart development and limb pattern formation. Binds to the core DNA motif of NPPA promoter. In Rattus norvegicus (Rat), this protein is T-box transcription factor TBX5 (Tbx5).